We begin with the raw amino-acid sequence, 1509 residues long: ABC transporter G family member 38 (1509 aa).

The ABC transporter 1 domain maps to 196–467 (LGLVGLNFAK…FERCGFRCPE (272 aa)). Residue 229–236 (GPPSSGKT) coordinates ATP. An ABC transmembrane type-2 1 domain is found at 545–758 (ELLKTSCSKE…AYIAFSSNEM (214 aa)). 7 helical membrane-spanning segments follow: residues 563-583 (FVYI…STVF), 598-618 (IYIG…FADL), 651-671 (IPSS…TMGF), 682-702 (LLVV…TAGL), 707-727 (VVTN…GGFI), 733-753 (IPKW…YIAF), and 791-811 (YWIA…LFSL). The ABC transporter 2 domain occupies 908–1160 (MSFNEINYYV…KVVEYFEAIP (253 aa)). Residue 953–960 (GVSGAGKT) participates in ATP binding. One can recognise an ABC transmembrane type-2 2 domain in the interval 1233 to 1447 (NQFKLCLWKQ…TVYGLIVSQY (215 aa)). A run of 7 helical transmembrane segments spans residues 1252–1272 (YNLV…TIFW), 1284–1304 (LLVI…ENSV), 1336–1356 (VVVE…IVYP), 1367–1387 (FFWF…YGMM), 1397–1417 (VASI…GFFI), 1425–1445 (WWVW…LIVS), and 1478–1498 (FMGV…FTYA).

The protein belongs to the ABC transporter superfamily. ABCG family. PDR (TC 3.A.1.205) subfamily.

Its subcellular location is the membrane. Functionally, may be a general defense protein. The protein is ABC transporter G family member 38 of Oryza sativa subsp. japonica (Rice).